Here is a 72-residue protein sequence, read N- to C-terminus: Translation initiation factor IF-1 (72 aa).

In terms of domain architecture, S1-like spans 1–72; sequence MSKEEAIEVE…TRGRITYRAK (72 aa).

Belongs to the IF-1 family. As to quaternary structure, component of the 30S ribosomal translation pre-initiation complex which assembles on the 30S ribosome in the order IF-2 and IF-3, IF-1 and N-formylmethionyl-tRNA(fMet); mRNA recruitment can occur at any time during PIC assembly.

It localises to the cytoplasm. In terms of biological role, one of the essential components for the initiation of protein synthesis. Stabilizes the binding of IF-2 and IF-3 on the 30S subunit to which N-formylmethionyl-tRNA(fMet) subsequently binds. Helps modulate mRNA selection, yielding the 30S pre-initiation complex (PIC). Upon addition of the 50S ribosomal subunit IF-1, IF-2 and IF-3 are released leaving the mature 70S translation initiation complex. This is Translation initiation factor IF-1 from Geotalea uraniireducens (strain Rf4) (Geobacter uraniireducens).